Here is a 169-residue protein sequence, read N- to C-terminus: 2-C-methyl-D-erythritol 2,4-cyclodiphosphate synthase (169 aa).

Residues Asp-13 and His-15 each contribute to the a divalent metal cation site. Residues 13-15 (DVH) and 39-40 (HS) contribute to the 4-CDP-2-C-methyl-D-erythritol 2-phosphate site. Residue His-47 participates in a divalent metal cation binding. 4-CDP-2-C-methyl-D-erythritol 2-phosphate is bound by residues 61–63 (DIG), 66–70 (FPDTD), Phe-144, and Arg-147.

Belongs to the IspF family. In terms of assembly, homotrimer. The cofactor is a divalent metal cation.

The enzyme catalyses 4-CDP-2-C-methyl-D-erythritol 2-phosphate = 2-C-methyl-D-erythritol 2,4-cyclic diphosphate + CMP. It participates in isoprenoid biosynthesis; isopentenyl diphosphate biosynthesis via DXP pathway; isopentenyl diphosphate from 1-deoxy-D-xylulose 5-phosphate: step 4/6. Functionally, involved in the biosynthesis of isopentenyl diphosphate (IPP) and dimethylallyl diphosphate (DMAPP), two major building blocks of isoprenoid compounds. Catalyzes the conversion of 4-diphosphocytidyl-2-C-methyl-D-erythritol 2-phosphate (CDP-ME2P) to 2-C-methyl-D-erythritol 2,4-cyclodiphosphate (ME-CPP) with a corresponding release of cytidine 5-monophosphate (CMP). This chain is 2-C-methyl-D-erythritol 2,4-cyclodiphosphate synthase, found in Cupriavidus necator (strain ATCC 17699 / DSM 428 / KCTC 22496 / NCIMB 10442 / H16 / Stanier 337) (Ralstonia eutropha).